The sequence spans 376 residues: Alanine racemase 1 (376 aa).

Catalysis depends on K40, which acts as the Proton acceptor; specific for D-alanine. K40 carries the post-translational modification N6-(pyridoxal phosphate)lysine. R138 contacts substrate. Y268 (proton acceptor; specific for L-alanine) is an active-site residue. Position 316 (M316) interacts with substrate.

This sequence belongs to the alanine racemase family. The cofactor is pyridoxal 5'-phosphate.

It catalyses the reaction L-alanine = D-alanine. Its pathway is amino-acid biosynthesis; D-alanine biosynthesis; D-alanine from L-alanine: step 1/1. Functionally, catalyzes the interconversion of L-alanine and D-alanine. May also act on other amino acids. The protein is Alanine racemase 1 (alr1) of Oceanobacillus iheyensis (strain DSM 14371 / CIP 107618 / JCM 11309 / KCTC 3954 / HTE831).